The primary structure comprises 342 residues: Putative gluconeogenesis factor (342 aa).

The segment at 318-342 (SEPPVAATQEIPIDGGRPRGDDAWR) is disordered. Threonine 325 carries the post-translational modification Phosphothreonine. The span at 333–342 (GRPRGDDAWR) shows a compositional bias: basic and acidic residues.

It belongs to the gluconeogenesis factor family. In terms of processing, phosphorylated by PknA and/or PknB.

It localises to the cytoplasm. In terms of biological role, required for morphogenesis under gluconeogenic growth conditions. The protein is Putative gluconeogenesis factor of Mycobacterium tuberculosis (strain CDC 1551 / Oshkosh).